We begin with the raw amino-acid sequence, 474 residues long: Tocopherol cyclase, chloroplastic (474 aa).

Residues 1-65 (MNLAVAAALP…TPTPQDRSLR (65 aa)) constitute a chloroplast transit peptide.

In terms of tissue distribution, present in all green tissues, both in bundle sheath and in mesophyll cells.

It is found in the plastid. It localises to the chloroplast. The catalysed reaction is gamma-tocopherol = 2,3-dimethyl-6-phytylbenzene-1,4-diol. Its pathway is cofactor biosynthesis; tocopherol biosynthesis. Its function is as follows. Involved in the synthesis of tocopherols (vitamin E), which presumably protect photosynthetic complexes from oxidative stress. Catalyzes the conversion of 2,3-dimethyl-5-phytyl-1,4-hydroquinone (DMPQ) to gamma-tocopherol. This is Tocopherol cyclase, chloroplastic from Zea mays (Maize).